A 166-amino-acid polypeptide reads, in one-letter code: uncharacterized protein (166 aa).

Residues 25–116 form a disordered region; that stretch reads PEEPPLWVPP…QGADEVHSQH (92 aa). A Phosphoserine modification is found at serine 105.

This is an uncharacterized protein from Rattus norvegicus (Rat).